Consider the following 481-residue polypeptide: 4-O-methyl-glucuronoyl methylesterase (481 aa).

The signal sequence occupies residues 1–21 (MVSQTVVSSLLVVLGAAGVRA). The CBM1 domain maps to 23 to 59 (QRQSLWGQCGGSGWSGPTLCVDGAWCNPQNQWYHQCI). 3 disulfides stabilise this stretch: cysteine 108–cysteine 143, cysteine 292–cysteine 428, and cysteine 324–cysteine 400. A GXSYXG catalytic site motif motif is present at residues 291-296 (GCSRNG). Catalysis depends on serine 293, which acts as the Nucleophile. Substrate-binding residues include lysine 297, glutamine 339, glutamate 347, and tryptophan 391. Histidine 427 functions as the Proton donor/acceptor in the catalytic mechanism.

The protein belongs to the carbohydrate esterase 15 (CE15) family.

The protein resides in the secreted. The catalysed reaction is a 4-O-methyl-alpha-D-glucuronosyl ester derivative + H2O = 4-O-methyl-alpha-D-glucuronate derivative + an alcohol + H(+). Glucuronoyl esterase which may play a significant role in biomass degradation, as it is considered to disconnect hemicellulose from lignin through the hydrolysis of the ester bond between 4-O-methyl-D-glucuronic acid residues of glucuronoxylans and aromatic alcohols of lignin. The sequence is that of 4-O-methyl-glucuronoyl methylesterase from Podospora anserina (strain S / ATCC MYA-4624 / DSM 980 / FGSC 10383) (Pleurage anserina).